A 70-amino-acid polypeptide reads, in one-letter code: uncharacterized protein (70 aa).

Residues 1–16 form the signal peptide; that stretch reads MKLLLVLITLIIAALA.

This is an uncharacterized protein from Orgyia pseudotsugata (Douglas-fir tussock moth).